The sequence spans 1019 residues: Mediator of replication checkpoint protein 1 (1019 aa).

Disordered regions lie at residues Met1–Pro33, Gln105–Ser143, Asn166–Lys202, Glu261–Ser290, Ile443–Phe683, and Thr965–Asp1019. Positions Ser17–Leu30 are enriched in acidic residues. Residues Leu177–Ser191 show a composition bias toward acidic residues. Composition is skewed to basic and acidic residues over residues Glu192 to Lys202, Asn271 to Val281, and Leu454 to Glu468. The span at Asp476–Val486 shows a compositional bias: acidic residues. A compositionally biased stretch (polar residues) spans Ile487–Val503. Basic and acidic residues predominate over residues Met556–Asp580. Polar residues-rich tracts occupy residues Gln590–Thr607 and Asn630–Val658. Ser604 carries the post-translational modification Phosphoserine. Thr645 carries the post-translational modification Phosphothreonine. The span at Glu671–Lys681 shows a compositional bias: basic and acidic residues.

In terms of assembly, interacts with cds1. Phosphorylated by rad3 and tel1.

Its subcellular location is the nucleus. Functionally, component of the replisome and is required for rad3-dependent activation of the checkpoint kinase cds1 in response to replication fork arrest. Phosphorylation allows it to mediate the activation of cds1. The chain is Mediator of replication checkpoint protein 1 (mrc1) from Schizosaccharomyces pombe (strain 972 / ATCC 24843) (Fission yeast).